The chain runs to 33 residues: Rugosin-B (33 aa).

Cys-27 and Cys-33 are joined by a disulfide.

It belongs to the frog skin active peptide (FSAP) family. Brevinin subfamily. As to expression, expressed by the skin glands.

Its subcellular location is the secreted. Shows antibacterial activity against both Gram-negative and Gram-positive bacteria. In Glandirana rugosa (Japanese wrinkled frog), this protein is Rugosin-B.